Reading from the N-terminus, the 295-residue chain is UDP-N-acetylenolpyruvoylglucosamine reductase (295 aa).

In terms of domain architecture, FAD-binding PCMH-type spans 23 to 188 (KVGGPADFLA…ISAKFALKPG (166 aa)). The active site involves arginine 167. Serine 217 acts as the Proton donor in catalysis. Glutamate 287 is a catalytic residue.

It belongs to the MurB family. FAD serves as cofactor.

Its subcellular location is the cytoplasm. The enzyme catalyses UDP-N-acetyl-alpha-D-muramate + NADP(+) = UDP-N-acetyl-3-O-(1-carboxyvinyl)-alpha-D-glucosamine + NADPH + H(+). It participates in cell wall biogenesis; peptidoglycan biosynthesis. Its function is as follows. Cell wall formation. This is UDP-N-acetylenolpyruvoylglucosamine reductase from Streptococcus pyogenes serotype M28 (strain MGAS6180).